We begin with the raw amino-acid sequence, 555 residues long: MYRTTCDAIAAILRQHTGKEDVMLTDGGDHADVASTIAFSLAKELRKAPAIIAQEIAGAISDQVMAETGAETRAVGPYVNFIFGAEYCMNVLEQAVREGYGKGQEKSERVVLEHTSANPNGPLHVGHIRNTIIGDTLARCFRKAGYPLEVQYYVNDMGRQIAIVAWGIATQGADIHAEGKGDHLIADVYIEANRHLEKEPALNAEIDRLMQLVESGDPDTISQFKIPVKRCLDGFKDTLAAMHVKHDRFIYESDFIRNGDTAKVLSRISHLPEARIEETLSLDLSAFGFEKNYILRRSDGTSVYAARDIAFHIWKGHNFDRVIDVLGADHKLIGTQLQATLEILGERVPEIVFFEFVSLPEGSMSTRKGKFISADELIAETERRAMEEVTARRSELSEEERKKIAHSVAISAIRYDIIRTIPEKSTVFDWKEALDFEKQSGPYIQYAHARACSILEKAESYTPCFEAEGEGEIALTKQIALFPKVITEVVTELKPHLLAIYARELADIFNSFYHAEPVLRAEGKIRDRRLTLVDATRNTLKEALETLGIDALRAM.

Residues 117 to 127 (ANPNGPLHVGH) carry the 'HIGH' region motif.

It belongs to the class-I aminoacyl-tRNA synthetase family.

It localises to the cytoplasm. It catalyses the reaction tRNA(Arg) + L-arginine + ATP = L-arginyl-tRNA(Arg) + AMP + diphosphate. The polypeptide is Arginine--tRNA ligase (Methanospirillum hungatei JF-1 (strain ATCC 27890 / DSM 864 / NBRC 100397 / JF-1)).